A 318-amino-acid polypeptide reads, in one-letter code: Methionyl-tRNA formyltransferase (318 aa).

Position 111–114 (111–114) interacts with (6S)-5,6,7,8-tetrahydrofolate; sequence SLLP.

This sequence belongs to the Fmt family.

It catalyses the reaction L-methionyl-tRNA(fMet) + (6R)-10-formyltetrahydrofolate = N-formyl-L-methionyl-tRNA(fMet) + (6S)-5,6,7,8-tetrahydrofolate + H(+). Its function is as follows. Attaches a formyl group to the free amino group of methionyl-tRNA(fMet). The formyl group appears to play a dual role in the initiator identity of N-formylmethionyl-tRNA by promoting its recognition by IF2 and preventing the misappropriation of this tRNA by the elongation apparatus. This Chlorobium limicola (strain DSM 245 / NBRC 103803 / 6330) protein is Methionyl-tRNA formyltransferase.